Here is a 526-residue protein sequence, read N- to C-terminus: Peptide chain release factor 3 (526 aa).

Positions 9–277 constitute a tr-type G domain; sequence DLRRTFAIIS…GLTKWAPKPL (269 aa). GTP contacts are provided by residues 18 to 25, 86 to 90, and 140 to 143; these read SHPDAGKT, DTPGH, and NKMD.

This sequence belongs to the TRAFAC class translation factor GTPase superfamily. Classic translation factor GTPase family. PrfC subfamily.

It localises to the cytoplasm. Functionally, increases the formation of ribosomal termination complexes and stimulates activities of RF-1 and RF-2. It binds guanine nucleotides and has strong preference for UGA stop codons. It may interact directly with the ribosome. The stimulation of RF-1 and RF-2 is significantly reduced by GTP and GDP, but not by GMP. In Colwellia psychrerythraea (strain 34H / ATCC BAA-681) (Vibrio psychroerythus), this protein is Peptide chain release factor 3.